Here is a 381-residue protein sequence, read N- to C-terminus: Heme A synthase (381 aa).

The next 5 helical transmembrane spans lie at 25 to 45, 112 to 132, 138 to 158, 176 to 196, and 212 to 232; these read GAVRAWLYLLAVLVVAMVAVG, LLGRIVGLVFFLPFAWFWWRG, LLLGLLGLGLLGGLQGAIGWI, LALHLTTASLILAGLVWLAAG, and VAGLLPVLVLIQIWLGGLVAG. H277 serves as a coordination point for heme. 3 helical membrane passes run 279-299, 307-327, and 329-349; these read LFAYLVVLVALAHAVQAVRMA, AMGVAALTLAQMGLGIVTLLL, and VPLWAGLAHQVFAMAVLIMAT. H337 contacts heme.

It belongs to the COX15/CtaA family. Type 2 subfamily. As to quaternary structure, interacts with CtaB. Heme b serves as cofactor.

The protein localises to the cell membrane. The catalysed reaction is Fe(II)-heme o + 2 A + H2O = Fe(II)-heme a + 2 AH2. The protein operates within porphyrin-containing compound metabolism; heme A biosynthesis; heme A from heme O: step 1/1. Functionally, catalyzes the conversion of heme O to heme A by two successive hydroxylations of the methyl group at C8. The first hydroxylation forms heme I, the second hydroxylation results in an unstable dihydroxymethyl group, which spontaneously dehydrates, resulting in the formyl group of heme A. The polypeptide is Heme A synthase (Methylorubrum populi (strain ATCC BAA-705 / NCIMB 13946 / BJ001) (Methylobacterium populi)).